Consider the following 128-residue polypeptide: Fluoride-specific ion channel FluC (128 aa).

4 helical membrane-spanning segments follow: residues 5-25 (IVAI…LSIG), 35-55 (LGTL…VVAF), 67-87 (LFVI…SVEV), and 96-116 (FGWA…LTGL). Na(+) contacts are provided by G75 and T78.

The protein belongs to the fluoride channel Fluc/FEX (TC 1.A.43) family.

The protein localises to the cell inner membrane. The enzyme catalyses fluoride(in) = fluoride(out). With respect to regulation, na(+) is not transported, but it plays an essential structural role and its presence is essential for fluoride channel function. In terms of biological role, fluoride-specific ion channel. Important for reducing fluoride concentration in the cell, thus reducing its toxicity. In Burkholderia mallei (strain NCTC 10247), this protein is Fluoride-specific ion channel FluC.